The sequence spans 227 residues: Broad specificity amino-acid racemase RacX (227 aa).

51–53 (DRP) provides a ligand contact to substrate. The Proton donor/acceptor role is filled by cysteine 82. Substrate is bound by residues 83–85 (NTA) and lysine 161. Cysteine 191 acts as the Proton donor/acceptor in catalysis.

The protein belongs to the aspartate/glutamate racemases family. Homodimer.

It carries out the reaction an L-alpha-amino acid = a D-alpha-amino acid. The catalysed reaction is (2S,6S)-2,6-diaminopimelate = meso-2,6-diaminopimelate. It catalyses the reaction L-lysine = D-lysine. The enzyme catalyses L-arginine = D-arginine. It carries out the reaction L-ornithine = D-ornithine. The catalysed reaction is L-histidine = D-histidine. It catalyses the reaction L-alanine = D-alanine. The enzyme catalyses L-tyrosine = D-tyrosine. It carries out the reaction L-phenylalanine = D-phenylalanine. The catalysed reaction is L-serine = D-serine. It catalyses the reaction L-glutamine = D-glutamine. The enzyme catalyses L-methionine = D-methionine. It carries out the reaction L-asparagine = D-asparagine. The catalysed reaction is L-homoserine = D-homoserine. In terms of biological role, amino-acid racemase able to utilize a broad range of substrates. Preferentially catalyzes the epimerization of LL-diaminopimelate, as well as the racemization of D-lysine, L-arginine, L-ornithine, L-lysine and D-arginine. Has lower activity against D-ornithine, L-histidine, L-alanine, L-tyrosine, L-phenylalanine, L-serine, L-glutamine, L-methionine, L-asparagine and L-homoserine. Has weak activity against L-norleucine, L-aminobutyric acid and L-norvaline. Has no activity toward nine L-amino acids (Thr, Glu, Asp, Val, Leu, Ile, Trp, Cit and Aad). D-amino acids might be used as components of peptidoglycan and/or be involved in peptidoglycan metabolism and remodeling. The protein is Broad specificity amino-acid racemase RacX (racX) of Bacillus subtilis (strain 168).